A 120-amino-acid polypeptide reads, in one-letter code: Large ribosomal subunit protein bL17 (120 aa).

This sequence belongs to the bacterial ribosomal protein bL17 family. Part of the 50S ribosomal subunit. Contacts protein L32.

This Shouchella clausii (strain KSM-K16) (Alkalihalobacillus clausii) protein is Large ribosomal subunit protein bL17.